The following is a 200-amino-acid chain: Imidazoleglycerol-phosphate dehydratase (200 aa).

This sequence belongs to the imidazoleglycerol-phosphate dehydratase family.

The protein localises to the cytoplasm. The catalysed reaction is D-erythro-1-(imidazol-4-yl)glycerol 3-phosphate = 3-(imidazol-4-yl)-2-oxopropyl phosphate + H2O. It functions in the pathway amino-acid biosynthesis; L-histidine biosynthesis; L-histidine from 5-phospho-alpha-D-ribose 1-diphosphate: step 6/9. This is Imidazoleglycerol-phosphate dehydratase from Chlorobium phaeobacteroides (strain DSM 266 / SMG 266 / 2430).